The following is a 218-amino-acid chain: Protein Syd (218 aa).

It belongs to the Syd family.

Its subcellular location is the cell inner membrane. In terms of biological role, interacts with the SecY protein in vivo. May bind preferentially to an uncomplexed state of SecY, thus functioning either as a chelating agent for excess SecY in the cell or as a regulatory factor that negatively controls the translocase function. The polypeptide is Protein Syd (Shewanella denitrificans (strain OS217 / ATCC BAA-1090 / DSM 15013)).